Reading from the N-terminus, the 497-residue chain is NAD(P)H-quinone oxidoreductase chain 4, chloroplastic (497 aa).

14 consecutive transmembrane segments (helical) span residues 5 to 25 (VPWL…IPIL), 36 to 56 (YTLG…YCHF), 88 to 108 (LGLV…AWPI), 112 to 132 (TRLF…LFVS), 135 to 155 (ILLF…LLCL), 168 to 188 (FVLY…TMSF), 212 to 232 (VLIY…FPFH), 243 to 263 (HYST…YGLI), 275 to 295 (FLLG…ASLI), 306 to 326 (IAYS…SFTE), 331 to 351 (GAIL…FLAG), 387 to 407 (LALP…GVVT), 418 to 438 (GITV…LSML), and 463 to 483 (LFIL…PNLI).

The protein belongs to the complex I subunit 4 family.

It localises to the plastid. The protein localises to the chloroplast thylakoid membrane. It carries out the reaction a plastoquinone + NADH + (n+1) H(+)(in) = a plastoquinol + NAD(+) + n H(+)(out). The catalysed reaction is a plastoquinone + NADPH + (n+1) H(+)(in) = a plastoquinol + NADP(+) + n H(+)(out). In Adiantum capillus-veneris (Maidenhair fern), this protein is NAD(P)H-quinone oxidoreductase chain 4, chloroplastic.